The sequence spans 316 residues: 2-phospho-L-lactate guanylyltransferase (316 aa).

Positions 72–85 are enriched in low complexity; sequence TGVSTEAVSTSTST. Disordered stretches follow at residues 72-107 and 119-138; these read TGVS…PTHT and LRDD…DGDK. Residues 92 to 107 are compositionally biased toward polar residues; it reads HNAASDNYVSQSPTHT.

This sequence belongs to the CofC family. Homodimer.

It catalyses the reaction (2S)-2-phospholactate + GTP + H(+) = (2S)-lactyl-2-diphospho-5'-guanosine + diphosphate. It functions in the pathway cofactor biosynthesis; coenzyme F420 biosynthesis. Its function is as follows. Guanylyltransferase that catalyzes the activation of (2S)-2-phospholactate (2-PL) as (2S)-lactyl-2-diphospho-5'-guanosine, via the condensation of 2-PL with GTP. It is involved in the biosynthesis of coenzyme F420, a hydride carrier cofactor. This chain is 2-phospho-L-lactate guanylyltransferase, found in Haloquadratum walsbyi (strain DSM 16790 / HBSQ001).